The chain runs to 256 residues: Pimeloyl-[acyl-carrier protein] methyl ester esterase (256 aa).

In terms of domain architecture, AB hydrolase-1 spans 15–242 (HLVLLHGWGL…AAHAPFISHP (228 aa)). Substrate contacts are provided by residues Trp22, 82-83 (SL), and 143-147 (FLALQ). Catalysis depends on Ser82, which acts as the Nucleophile. Residues Asp207 and His235 contribute to the active site. Residue His235 coordinates substrate.

It belongs to the AB hydrolase superfamily. Carboxylesterase BioH family. In terms of assembly, monomer.

Its subcellular location is the cytoplasm. The catalysed reaction is 6-carboxyhexanoyl-[ACP] methyl ester + H2O = 6-carboxyhexanoyl-[ACP] + methanol + H(+). The protein operates within cofactor biosynthesis; biotin biosynthesis. Functionally, the physiological role of BioH is to remove the methyl group introduced by BioC when the pimeloyl moiety is complete. It allows to synthesize pimeloyl-ACP via the fatty acid synthetic pathway through the hydrolysis of the ester bonds of pimeloyl-ACP esters. The polypeptide is Pimeloyl-[acyl-carrier protein] methyl ester esterase (Escherichia coli O7:K1 (strain IAI39 / ExPEC)).